The sequence spans 345 residues: Probable dual-specificity RNA methyltransferase RlmN (345 aa).

Glu-90 acts as the Proton acceptor in catalysis. Residues Gln-96–Asp-327 enclose the Radical SAM core domain. An intrachain disulfide couples Cys-103 to Cys-332. [4Fe-4S] cluster contacts are provided by Cys-110, Cys-114, and Cys-117. Residues Gly-160 to Glu-161, Ser-192, Ser-215 to His-217, and Asn-291 each bind S-adenosyl-L-methionine. Cys-332 acts as the S-methylcysteine intermediate in catalysis.

This sequence belongs to the radical SAM superfamily. RlmN family. It depends on [4Fe-4S] cluster as a cofactor.

The protein resides in the cytoplasm. It catalyses the reaction adenosine(2503) in 23S rRNA + 2 reduced [2Fe-2S]-[ferredoxin] + 2 S-adenosyl-L-methionine = 2-methyladenosine(2503) in 23S rRNA + 5'-deoxyadenosine + L-methionine + 2 oxidized [2Fe-2S]-[ferredoxin] + S-adenosyl-L-homocysteine. The enzyme catalyses adenosine(37) in tRNA + 2 reduced [2Fe-2S]-[ferredoxin] + 2 S-adenosyl-L-methionine = 2-methyladenosine(37) in tRNA + 5'-deoxyadenosine + L-methionine + 2 oxidized [2Fe-2S]-[ferredoxin] + S-adenosyl-L-homocysteine. Its function is as follows. Specifically methylates position 2 of adenine 2503 in 23S rRNA and position 2 of adenine 37 in tRNAs. This is Probable dual-specificity RNA methyltransferase RlmN from Spiroplasma citri.